The chain runs to 281 residues: TIP41-like protein (281 aa).

Belongs to the TIP41 family.

This Caenorhabditis elegans protein is TIP41-like protein.